We begin with the raw amino-acid sequence, 462 residues long: UDP-N-acetylmuramoylalanine--D-glutamate ligase (462 aa).

120-126 contributes to the ATP binding site; sequence GTNGKTT.

Belongs to the MurCDEF family.

The protein resides in the cytoplasm. The catalysed reaction is UDP-N-acetyl-alpha-D-muramoyl-L-alanine + D-glutamate + ATP = UDP-N-acetyl-alpha-D-muramoyl-L-alanyl-D-glutamate + ADP + phosphate + H(+). It participates in cell wall biogenesis; peptidoglycan biosynthesis. Its function is as follows. Cell wall formation. Catalyzes the addition of glutamate to the nucleotide precursor UDP-N-acetylmuramoyl-L-alanine (UMA). The chain is UDP-N-acetylmuramoylalanine--D-glutamate ligase from Bdellovibrio bacteriovorus (strain ATCC 15356 / DSM 50701 / NCIMB 9529 / HD100).